A 410-amino-acid polypeptide reads, in one-letter code: UDP-N-acetylglucosamine--dolichyl-phosphate N-acetylglucosaminephosphotransferase (410 aa).

The Lumenal portion of the chain corresponds to 1 to 10; that stretch reads MWAFPELPLP. Residues 11–40 traverse the membrane as a helical segment; sequence LPLLVNLIGSLLGFVATVTLIPAFRSHFIA. Residues 41-60 lie on the Cytoplasmic side of the membrane; sequence ARLCGQDLNKLSQQQIPESQ. Residues 46–48 and E58 each bind UDP-N-acetyl-alpha-D-glucosamine; that span reads QDL. A helical membrane pass occupies residues 61 to 80; sequence GVISGAVFLIILFCFIPFPF. At 81-93 the chain is on the lumenal side; it reads LNCFVEEQCKAFP. The helical transmembrane segment at 94–120 threads the bilayer; sequence HHEFVALIGALLAICCMIFLGFADDVL. The Cytoplasmic portion of the chain corresponds to 121–123; that stretch reads NLR. Residues 124-145 traverse the membrane as a helical segment; that stretch reads WRHKLLLPTAASLPLLMVYFTN. K127 provides a ligand contact to dolichyl phosphate. Residues 146–168 are Lumenal-facing; the sequence is FGNTTIVVPKPFRWILGLHLDLG. Residue N148 is glycosylated (N-linked (GlcNAc...) asparagine). The chain crosses the membrane as a helical span at residues 169–188; that stretch reads ILYYVYMGLLAVFCTNAINI. 180-188 provides a ligand contact to dolichyl phosphate; that stretch reads VFCTNAINI. Mg(2+) is bound at residue N187. Topologically, residues 189–194 are cytoplasmic; sequence LAGING. N193 provides a ligand contact to UDP-N-acetyl-alpha-D-glucosamine. A helical transmembrane segment spans residues 195–215; sequence LEAGQSLVISASIIVFNLVEL. Residues 216–220 are Lumenal-facing; sequence EGDYR. The chain crosses the membrane as a helical span at residues 221–244; it reads DDHIFSLYFMIPFFFTTLGLLYHN. Residues 245–252 are Cytoplasmic-facing; sequence WYPSRVFV. The helical transmembrane segment at 253–271 threads the bilayer; the sequence is GDTFCYFAGMTFAVVGILG. A Mg(2+)-binding site is contributed by D254. The Lumenal portion of the chain corresponds to 272-273; sequence HF. A helical transmembrane segment spans residues 274–295; the sequence is SKTMLLFFMPQVFNFLYSLPQL. The Cytoplasmic portion of the chain corresponds to 296–377; it reads FHIIPCPRHR…LLLKVFGPIH (82 aa). 303 to 305 is a binding site for UDP-N-acetyl-alpha-D-glucosamine; it reads RHR. A helical membrane pass occupies residues 378–402; sequence ERNLTLLLLLLQVLSSAATFSIRYQ. Over 403-410 the chain is Lumenal; the sequence is LVRLFYDV.

Belongs to the glycosyltransferase 4 family. In terms of assembly, homodimer. Mg(2+) is required as a cofactor.

The protein resides in the endoplasmic reticulum membrane. The enzyme catalyses a di-trans,poly-cis-dolichyl phosphate + UDP-N-acetyl-alpha-D-glucosamine = an N-acetyl-alpha-D-glucosaminyl-diphospho-di-trans,poly-cis-dolichol + UMP. It participates in protein modification; protein glycosylation. Inhibited by natural nucleoside antibiotic tunicamycin, which acts as a structural analog and competitor of UDP-GlcNAc. UDP-N-acetylglucosamine--dolichyl-phosphate N-acetylglucosaminephosphotransferase that operates in the biosynthetic pathway of dolichol-linked oligosaccharides, the glycan precursors employed in protein asparagine (N)-glycosylation. The assembly of dolichol-linked oligosaccharides begins on the cytosolic side of the endoplasmic reticulum membrane and finishes in its lumen. The sequential addition of sugars to dolichol pyrophosphate produces dolichol-linked oligosaccharides containing fourteen sugars, including two GlcNAcs, nine mannoses and three glucoses. Once assembled, the oligosaccharide is transferred from the lipid to nascent proteins by oligosaccharyltransferases. Catalyzes the initial step of dolichol-linked oligosaccharide biosynthesis, transfering GlcNAc-1-P from cytosolic UDP-GlcNAc onto the carrier lipid dolichyl phosphate (P-dolichol), yielding GlcNAc-P-P-dolichol embedded in the cytoplasmic leaflet of the endoplasmic reticulum membrane. The polypeptide is UDP-N-acetylglucosamine--dolichyl-phosphate N-acetylglucosaminephosphotransferase (Mus musculus (Mouse)).